The sequence spans 122 residues: UPF0102 protein RL0336 (122 aa).

It belongs to the UPF0102 family.

The chain is UPF0102 protein RL0336 from Rhizobium johnstonii (strain DSM 114642 / LMG 32736 / 3841) (Rhizobium leguminosarum bv. viciae).